The following is a 223-amino-acid chain: N-terminal Xaa-Pro-Lys N-methyltransferase 1 (223 aa).

M1 carries the N-acetylmethionine modification. The residue at position 2 (T2) is an N-acetylthreonine; in N-terminal Xaa-Pro-Lys N-methyltransferase 1, N-terminally processed. S-adenosyl-L-methionine-binding positions include G69, R74, 91-93, 119-120, and Q135; these read DVT and LQ.

It belongs to the methyltransferase superfamily. NTM1 family.

Its subcellular location is the nucleus. It carries out the reaction N-terminal L-alanyl-L-prolyl-L-lysyl-[protein] + 3 S-adenosyl-L-methionine = N-terminal N,N,N-trimethyl-L-alanyl-L-prolyl-L-lysyl-[protein] + 3 S-adenosyl-L-homocysteine + 3 H(+). It catalyses the reaction N-terminal L-seryl-L-prolyl-L-lysyl-[protein] + 3 S-adenosyl-L-methionine = N-terminal N,N,N-trimethyl-L-seryl-L-prolyl-L-lysyl-[protein] + 3 S-adenosyl-L-homocysteine + 3 H(+). The enzyme catalyses N-terminal L-prolyl-L-prolyl-L-lysyl-[protein] + 2 S-adenosyl-L-methionine = N-terminal N,N-dimethyl-L-prolyl-L-prolyl-L-lysyl-[protein] + 2 S-adenosyl-L-homocysteine + 2 H(+). In terms of biological role, distributive alpha-N-methyltransferase that methylates the N-terminus of target proteins containing the N-terminal motif [Ala/Gly/Pro/Ser]-Pro-Lys when the initiator Met is cleaved. Specifically catalyzes mono-, di- or tri-methylation of the exposed alpha-amino group of the Ala, Gly or Ser residue in the [Ala/Gly/Ser]-Pro-Lys motif and mono- or di-methylation of Pro in the Pro-Pro-Lys motif. Some of the substrates may be primed by NTMT2-mediated monomethylation. Catalyzes the trimethylation of the N-terminal Gly in CENPA (after removal of Met-1). Responsible for the N-terminal methylation of KLHL31, MYL2, MYL3, RB1, RCC1, RPL23A and SET. Required during mitosis for normal bipolar spindle formation and chromosome segregation via its action on RCC1. This chain is N-terminal Xaa-Pro-Lys N-methyltransferase 1 (Ntmt1), found in Rattus norvegicus (Rat).